The chain runs to 877 residues: DNA polymerase I (877 aa).

A 5'-3' exonuclease domain is found at 180-272; that stretch reads TPSQFIDLKA…GLEDTLLKEK (93 aa). The 157-residue stretch at 312-468 folds into the 3'-5' exonuclease domain; it reads FEIVTDKSSV…AKEKMMAELI (157 aa).

This sequence belongs to the DNA polymerase type-A family. As to quaternary structure, single-chain monomer with multiple functions.

The enzyme catalyses DNA(n) + a 2'-deoxyribonucleoside 5'-triphosphate = DNA(n+1) + diphosphate. In terms of biological role, in addition to polymerase activity, this DNA polymerase exhibits 3'-5' and 5'-3' exonuclease activity. This chain is DNA polymerase I (polA), found in Lactococcus lactis subsp. cremoris (strain MG1363).